Here is a 430-residue protein sequence, read N- to C-terminus: MYLKQNLMSYLAQAIGELKSQIHAYLQQSTNELVRFQVKLDKVDLLAWLKGQSAYPQFYLHFRDEEKALAALGAVQSFSQLNLAQEFIEESGFPLVGGLQFQGTAQFVLPKMLVEQDNKGTLVSFFVKNEQSANDTLAHLKTFENLTALSALPKQIPLHTELRANERTWCDWVNQALVEIKSGELTKIVLANETTFHLKQAINAYDFLAESEKQNQGCYHFLWAENSHSVFVGSTPERLFAREYNLLLTEALAGTASVSESEEETQSQANWLLNDEKNLKENWLVVEDISQNLRKQVESFDVSNVELKPLRKVQHLIRKIRANLTAHYADVNILKAIHPTAAVSGLPQQQAKMILSEIETFDRGWYAGTLGVMSDVCSEFCVAIRSAFIEGHRIRVFAGAGIVAGSQPLEEWKEIERKAAGLISLFAEEK.

The Proton acceptor role is filled by K187. Residue E237 is the Proton donor of the active site. Residues E281 and E414 each contribute to the Mg(2+) site.

Belongs to the isochorismate synthase family. The cofactor is Mg(2+).

The catalysed reaction is chorismate = isochorismate. The protein operates within quinol/quinone metabolism; 1,4-dihydroxy-2-naphthoate biosynthesis; 1,4-dihydroxy-2-naphthoate from chorismate: step 1/7. It participates in quinol/quinone metabolism; menaquinone biosynthesis. Its function is as follows. Catalyzes the conversion of chorismate to isochorismate. This chain is Isochorismate synthase MenF, found in Haemophilus influenzae (strain ATCC 51907 / DSM 11121 / KW20 / Rd).